The primary structure comprises 108 residues: Large ribosomal subunit protein uL24 (108 aa).

It belongs to the universal ribosomal protein uL24 family. In terms of assembly, part of the 50S ribosomal subunit.

Its function is as follows. One of two assembly initiator proteins, it binds directly to the 5'-end of the 23S rRNA, where it nucleates assembly of the 50S subunit. Functionally, one of the proteins that surrounds the polypeptide exit tunnel on the outside of the subunit. In Moorella thermoacetica (strain ATCC 39073 / JCM 9320), this protein is Large ribosomal subunit protein uL24.